A 425-amino-acid chain; its full sequence is Perilipin-2 (425 aa).

The residue at position 2 (A2) is an N-acetylalanine. S213 is subject to Phosphoserine. Y230 is modified (phosphotyrosine).

The protein belongs to the perilipin family. Interacts with IRGC. Acylated; primarily with C14, C16 and C18 fatty acids. Post-translationally, phosphorylation at Tyr-230 by isoform 1 of CHKA (CHKalpha2) promotes dissociation from lipid droplets: dissociation is followed by recruitment of autophagosome machinery to lipid droplets and subsequent lipid droplet lipolysis. In terms of processing, polyubiquitination of Nt-acetylatable A-PLIN2 by MARCHF6 lead to degradation by 26S proteasomes. In terms of tissue distribution, adipose tissue specific. Expressed abundantly and preferentially in fat pads.

It localises to the membrane. It is found in the lipid droplet. Its function is as follows. Structural component of lipid droplets, which is required for the formation and maintenance of lipid storage droplets. This chain is Perilipin-2, found in Mus musculus (Mouse).